The primary structure comprises 240 residues: Ubiquinone biosynthesis O-methyltransferase (240 aa).

S-adenosyl-L-methionine contacts are provided by R44, G64, D85, and M129.

The protein belongs to the methyltransferase superfamily. UbiG/COQ3 family.

The enzyme catalyses a 3-demethylubiquinol + S-adenosyl-L-methionine = a ubiquinol + S-adenosyl-L-homocysteine + H(+). The catalysed reaction is a 3-(all-trans-polyprenyl)benzene-1,2-diol + S-adenosyl-L-methionine = a 2-methoxy-6-(all-trans-polyprenyl)phenol + S-adenosyl-L-homocysteine + H(+). The protein operates within cofactor biosynthesis; ubiquinone biosynthesis. Its function is as follows. O-methyltransferase that catalyzes the 2 O-methylation steps in the ubiquinone biosynthetic pathway. This Escherichia coli O81 (strain ED1a) protein is Ubiquinone biosynthesis O-methyltransferase.